The primary structure comprises 361 residues: Peptide chain release factor 1 (361 aa).

Gln235 is subject to N5-methylglutamine.

Belongs to the prokaryotic/mitochondrial release factor family. In terms of processing, methylated by PrmC. Methylation increases the termination efficiency of RF1.

Its subcellular location is the cytoplasm. In terms of biological role, peptide chain release factor 1 directs the termination of translation in response to the peptide chain termination codons UAG and UAA. This chain is Peptide chain release factor 1, found in Xanthomonas campestris pv. campestris (strain B100).